Consider the following 305-residue polypeptide: Serine/threonine-protein phosphatase PP-X isozyme 1 (305 aa).

Mn(2+) contacts are provided by D51, H53, D79, and N111. The active-site Proton donor is the H112. 2 residues coordinate Mn(2+): H161 and H236.

The protein belongs to the PPP phosphatase family. PP-4 (PP-X) subfamily. Interacts with TAP46. Mn(2+) serves as cofactor. As to expression, ubiquitous, mostly expressed in root mersitems, flowers, and vascular tissues.

It is found in the plastid stroma. It catalyses the reaction O-phospho-L-seryl-[protein] + H2O = L-seryl-[protein] + phosphate. It carries out the reaction O-phospho-L-threonyl-[protein] + H2O = L-threonyl-[protein] + phosphate. The polypeptide is Serine/threonine-protein phosphatase PP-X isozyme 1 (PPX1) (Arabidopsis thaliana (Mouse-ear cress)).